A 414-amino-acid chain; its full sequence is CinA-like protein (414 aa).

The protein belongs to the CinA family.

This chain is CinA-like protein, found in Koribacter versatilis (strain Ellin345).